Reading from the N-terminus, the 240-residue chain is Glutathione S-transferase theta-1 (240 aa).

The GST N-terminal domain maps to 2 to 82 (VLELYLDLLS…YLAHKYKVPD (81 aa)). Glutathione contacts are provided by residues His40, 53–54 (RV), and 66–67 (ES). Residues 88-222 (DLQARARVDE…VILKVKDCPP (135 aa)) form the GST C-terminal domain.

This sequence belongs to the GST superfamily. Theta family. As to quaternary structure, homodimer. In liver, highest expression found in central vein limiting plate hepatocytes. Also expressed in interlobular bile duct epithelial cells. In lung, expressed in club cells and ciliated cells of the bronchiolar epithelium and in type II alveolar cells of the lung parenchyma.

The protein resides in the cytoplasm. It localises to the nucleus. The catalysed reaction is RX + glutathione = an S-substituted glutathione + a halide anion + H(+). Its function is as follows. Conjugation of reduced glutathione to a wide number of exogenous and endogenous hydrophobic electrophiles. Also binds steroids, bilirubin, carcinogens and numerous organic anions. Has dichloromethane dehalogenase activity. This Mus musculus (Mouse) protein is Glutathione S-transferase theta-1 (Gstt1).